Reading from the N-terminus, the 388-residue chain is Succinate--CoA ligase [ADP-forming] subunit beta (388 aa).

The region spanning K9 to K245 is the ATP-grasp domain. ATP contacts are provided by residues K46, G53–G55, E100, Y103, and E108. Mg(2+) is bound by residues N200 and D214. Residues N265 and G322 to V324 contribute to the substrate site.

The protein belongs to the succinate/malate CoA ligase beta subunit family. Heterotetramer of two alpha and two beta subunits. Mg(2+) is required as a cofactor.

It carries out the reaction succinate + ATP + CoA = succinyl-CoA + ADP + phosphate. The enzyme catalyses GTP + succinate + CoA = succinyl-CoA + GDP + phosphate. It functions in the pathway carbohydrate metabolism; tricarboxylic acid cycle; succinate from succinyl-CoA (ligase route): step 1/1. In terms of biological role, succinyl-CoA synthetase functions in the citric acid cycle (TCA), coupling the hydrolysis of succinyl-CoA to the synthesis of either ATP or GTP and thus represents the only step of substrate-level phosphorylation in the TCA. The beta subunit provides nucleotide specificity of the enzyme and binds the substrate succinate, while the binding sites for coenzyme A and phosphate are found in the alpha subunit. The protein is Succinate--CoA ligase [ADP-forming] subunit beta of Neisseria meningitidis serogroup A / serotype 4A (strain DSM 15465 / Z2491).